The primary structure comprises 219 residues: Transcription factor MYB23 (219 aa).

HTH myb-type domains are found at residues 9 to 61 and 62 to 116; these read EHEY…MNYL and SPNV…SKKL. 2 consecutive DNA-binding regions (H-T-H motif) follow at residues 37–61 and 89–112; these read WNRI…MNYL and WSLI…NTHL.

As to quaternary structure, interacts with BHLH2/EGL3/MYC146, BHLH12/MYC1 and GL3. Expressed in roots, seed coats, leaves, stems and flowers. Detected specifically in trichomes, and in the cell division and differentiation zone of the root.

It is found in the nucleus. In terms of biological role, transcription activator, when associated with BHLH2/EGL3/MYC146 or BHLH12/MYC1. Regulates the epidermal cell fate specification. Mediates the formation of columellae and accumulation of mucilages on seed coats. Controls the elongation of epidermal cells positively in roots but negatively in stems, leading to the promotion of primary roots elongation and repression of leaves and stems elongation, respectively. Ovoids ectopic root-hair formation, probably by inducing GL2 in roots. Controls trichome initiation and branching. The sequence is that of Transcription factor MYB23 (MYB23) from Arabidopsis thaliana (Mouse-ear cress).